Reading from the N-terminus, the 330-residue chain is Fructose-1,6-bisphosphatase class 1 (330 aa).

Mg(2+) contacts are provided by Glu84, Asp103, Leu105, and Asp106. Substrate is bound by residues 106–109 (DGSS), Asn196, and Lys262. Glu268 is a Mg(2+) binding site.

The protein belongs to the FBPase class 1 family. Homotetramer. Mg(2+) serves as cofactor.

The protein localises to the cytoplasm. It carries out the reaction beta-D-fructose 1,6-bisphosphate + H2O = beta-D-fructose 6-phosphate + phosphate. It functions in the pathway carbohydrate biosynthesis; gluconeogenesis. This chain is Fructose-1,6-bisphosphatase class 1, found in Shewanella frigidimarina (strain NCIMB 400).